The chain runs to 660 residues: ATPase-like fidgetin (660 aa).

2 disordered regions span residues 141–186 and 209–334; these read KQIY…EDPF and ALSS…ADSK. Over residues 145–161 the composition is skewed to low complexity; that stretch reads SKHSPPSTSTSSIVSSS. The residue at position 177 (S177) is a Phosphoserine. The segment covering 213–239 has biased composition (polar residues); the sequence is DTGRSATMNSTTFPTAMKSQSTTKPTL. Residues 240 to 255 show a composition bias toward low complexity; the sequence is SNSVSSPSIQVSNNQN. A compositionally biased stretch (polar residues) spans 301 to 313; the sequence is LNSSHDTLGSSTR. Residues 314–333 show a composition bias toward low complexity; that stretch reads PSSADTAGSPATSPPATADS. 419–426 contacts ATP; it reads GPPGTGKT.

The protein belongs to the AAA ATPase family.

It localises to the nucleus. This Schizosaccharomyces pombe (strain 972 / ATCC 24843) (Fission yeast) protein is ATPase-like fidgetin (alf1).